Here is a 192-residue protein sequence, read N- to C-terminus: MATPMHRLIARRQAFDTELQPVKTFWILIQPSIVISEANKQHVRCQKCLEFGHWTYECTGKRKYLHRPSRTAELKKALKEKENRLLLQQSIGETNVERKAKKKRSKSVTSSSSSSSDSSASDSSSESEETSTSSSSEDSDTDESSSSSSSSASSTTSSSSSDSDSDSSSSSSSSTSTDSSSDDEPPKKKKKK.

A CCHC-type zinc finger spans residues 43–60 (VRCQKCLEFGHWTYECTG). The segment at 89–192 (QSIGETNVER…DEPPKKKKKK (104 aa)) is disordered. Low complexity-rich tracts occupy residues 109–136 (TSSS…SSSS) and 144–179 (SSSS…STDS).

The protein is Zinc finger CCHC domain-containing protein 10 (ZCCHC10) of Homo sapiens (Human).